A 129-amino-acid polypeptide reads, in one-letter code: Phosphoribosyl-AMP cyclohydrolase (129 aa).

Mg(2+) is bound at residue Asp-82. Zn(2+) is bound at residue Cys-83. Mg(2+) contacts are provided by Asp-84 and Asp-86. Residues Cys-99 and Cys-106 each contribute to the Zn(2+) site.

Belongs to the PRA-CH family. In terms of assembly, homodimer. Requires Mg(2+) as cofactor. It depends on Zn(2+) as a cofactor.

Its subcellular location is the cytoplasm. The catalysed reaction is 1-(5-phospho-beta-D-ribosyl)-5'-AMP + H2O = 1-(5-phospho-beta-D-ribosyl)-5-[(5-phospho-beta-D-ribosylamino)methylideneamino]imidazole-4-carboxamide. It functions in the pathway amino-acid biosynthesis; L-histidine biosynthesis; L-histidine from 5-phospho-alpha-D-ribose 1-diphosphate: step 3/9. Its function is as follows. Catalyzes the hydrolysis of the adenine ring of phosphoribosyl-AMP. The polypeptide is Phosphoribosyl-AMP cyclohydrolase (Methanosarcina barkeri (strain Fusaro / DSM 804)).